The chain runs to 263 residues: MFNYPLYIYRQDVKSKLMVTNSDFNFTIKETVTLELPFSEHIEELKQRLFHTFWIILILTFISLCEVKLLVKILELPVNNVKFFQLSPGEYFVSTVKISFYTGFLFGSPFAIGQIILFLLPGLTKKETKIILPLLLSSLGLFGFGLVFSYYALIPAALNFFLNYSDEVIEPLWSFDQYFEFILVLFYSTGLAFQIPIIQILLGLLNIISAKQMLAAWRYIILVSTIIGAILTPSTDPLTQLLLSIAILMLYFSGVGILFLIKN.

The next 7 helical transmembrane spans lie at 53–73, 103–123, 130–150, 153–173, 181–201, 213–233, and 241–261; these read FWIILILTFISLCEVKLLVKI, GFLFGSPFAIGQIILFLLPGL, IILPLLLSSLGLFGFGLVFSY, LIPAALNFFLNYSDEVIEPLW, FILVLFYSTGLAFQIPIIQIL, MLAAWRYIILVSTIIGAILTP, and LLLSIAILMLYFSGVGILFLI.

This sequence belongs to the TatC family.

The protein localises to the plastid. It localises to the chloroplast membrane. This is an uncharacterized protein from Trieres chinensis (Marine centric diatom).